The chain runs to 245 residues: Ribonuclease PH (245 aa).

Phosphate contacts are provided by residues Arg93 and 131 to 133 (GTR).

The protein belongs to the RNase PH family. In terms of assembly, homohexameric ring arranged as a trimer of dimers.

The catalysed reaction is tRNA(n+1) + phosphate = tRNA(n) + a ribonucleoside 5'-diphosphate. Its function is as follows. Phosphorolytic 3'-5' exoribonuclease that plays an important role in tRNA 3'-end maturation. Removes nucleotide residues following the 3'-CCA terminus of tRNAs; can also add nucleotides to the ends of RNA molecules by using nucleoside diphosphates as substrates, but this may not be physiologically important. Probably plays a role in initiation of 16S rRNA degradation (leading to ribosome degradation) during starvation. This is Ribonuclease PH from Corynebacterium glutamicum (strain ATCC 13032 / DSM 20300 / JCM 1318 / BCRC 11384 / CCUG 27702 / LMG 3730 / NBRC 12168 / NCIMB 10025 / NRRL B-2784 / 534).